A 314-amino-acid polypeptide reads, in one-letter code: Acetaldehyde dehydrogenase 1 (314 aa).

S11–I14 serves as a coordination point for NAD(+). C129 functions as the Acyl-thioester intermediate in the catalytic mechanism. NAD(+)-binding positions include S160–N168 and N292.

The protein belongs to the acetaldehyde dehydrogenase family.

It carries out the reaction acetaldehyde + NAD(+) + CoA = acetyl-CoA + NADH + H(+). This chain is Acetaldehyde dehydrogenase 1, found in Nocardioides sp. (strain ATCC BAA-499 / JS614).